We begin with the raw amino-acid sequence, 85 residues long: Large ribosomal subunit protein bL27 (85 aa).

Belongs to the bacterial ribosomal protein bL27 family.

The protein is Large ribosomal subunit protein bL27 of Solibacter usitatus (strain Ellin6076).